We begin with the raw amino-acid sequence, 453 residues long: MLNEPLQPQVAATSVILGLGKTGLSSARFLASRGFSIAVMDSRKSPPGLAALQEQNPDAVLRLGGFDAALIAEAEQLVVSPGVALSEPAILAARARGIPVVGDIELFASYVKAPVIGITGSNGKSTVTSLLEAMARQAGRQVLAGGNLGTPALELLEKPVPDLYILELSSFQLETTYTLDAVAACVLNISPDHMDRYPDLDAYCQAKARIYRGTGTMVINADDFRVASLVQPHRPCLRFTLGMPAVDEYGLQERAGETWLVRGHERLLSARRLPLAGRHNLANALAALALGEAVGLPRAAMLSALQAFSGLPHRCEWLAEVNGVRWYNDSKGTNVGATVAAIEGIPCQGKLILIAGGVGKGADFSPLSKPLIQRARAVVLMGQDASRLEAVLASGPPLYRVNSMDEAVVKANVLAQSGDCVLLSPACASFDMYADFEARGQAFRQAVREILSC.

120 to 126 (GSNGKST) provides a ligand contact to ATP.

This sequence belongs to the MurCDEF family.

The protein localises to the cytoplasm. It catalyses the reaction UDP-N-acetyl-alpha-D-muramoyl-L-alanine + D-glutamate + ATP = UDP-N-acetyl-alpha-D-muramoyl-L-alanyl-D-glutamate + ADP + phosphate + H(+). It participates in cell wall biogenesis; peptidoglycan biosynthesis. Functionally, cell wall formation. Catalyzes the addition of glutamate to the nucleotide precursor UDP-N-acetylmuramoyl-L-alanine (UMA). The polypeptide is UDP-N-acetylmuramoylalanine--D-glutamate ligase (Nitrosococcus oceani (strain ATCC 19707 / BCRC 17464 / JCM 30415 / NCIMB 11848 / C-107)).